We begin with the raw amino-acid sequence, 59 residues long: UPF0434 protein plu1633 (59 aa).

Belongs to the UPF0434 family.

In Photorhabdus laumondii subsp. laumondii (strain DSM 15139 / CIP 105565 / TT01) (Photorhabdus luminescens subsp. laumondii), this protein is UPF0434 protein plu1633.